We begin with the raw amino-acid sequence, 689 residues long: Glycine--tRNA ligase beta subunit (689 aa).

This sequence belongs to the class-II aminoacyl-tRNA synthetase family. Tetramer of two alpha and two beta subunits.

It localises to the cytoplasm. It carries out the reaction tRNA(Gly) + glycine + ATP = glycyl-tRNA(Gly) + AMP + diphosphate. This chain is Glycine--tRNA ligase beta subunit, found in Salmonella dublin (strain CT_02021853).